An 81-amino-acid polypeptide reads, in one-letter code: ATP synthase subunit c (81 aa).

Helical transmembrane passes span 5-25 (IAAG…IGAG) and 57-77 (VGLV…FVFA).

This sequence belongs to the ATPase C chain family. As to quaternary structure, F-type ATPases have 2 components, F(1) - the catalytic core - and F(0) - the membrane proton channel. F(1) has five subunits: alpha(3), beta(3), gamma(1), delta(1), epsilon(1). F(0) has three main subunits: a(1), b(2) and c(10-14). The alpha and beta chains form an alternating ring which encloses part of the gamma chain. F(1) is attached to F(0) by a central stalk formed by the gamma and epsilon chains, while a peripheral stalk is formed by the delta and b chains.

It localises to the cell membrane. F(1)F(0) ATP synthase produces ATP from ADP in the presence of a proton or sodium gradient. F-type ATPases consist of two structural domains, F(1) containing the extramembraneous catalytic core and F(0) containing the membrane proton channel, linked together by a central stalk and a peripheral stalk. During catalysis, ATP synthesis in the catalytic domain of F(1) is coupled via a rotary mechanism of the central stalk subunits to proton translocation. In terms of biological role, key component of the F(0) channel; it plays a direct role in translocation across the membrane. A homomeric c-ring of between 10-14 subunits forms the central stalk rotor element with the F(1) delta and epsilon subunits. This Mycobacterium sp. (strain JLS) protein is ATP synthase subunit c.